Consider the following 69-residue polypeptide: Cytochrome c oxidase subunit 8A, mitochondrial (69 aa).

The transit peptide at 1–25 (MSVLTPLLLRGLTGSARRLPVPCAR) directs the protein to the mitochondrion. The SIFI-degron signature appears at 2–19 (SVLTPLLLRGLTGSARRL). The Mitochondrial matrix portion of the chain corresponds to 26–36 (VHSKPPREQLG). Residues 37–60 (TMDIAIGLTSCFVCFLLPSGWVLS) traverse the membrane as a helical segment. Topologically, residues 61–69 (HLENYKKRE) are mitochondrial intermembrane.

Belongs to the cytochrome c oxidase VIII family. In terms of assembly, component of the cytochrome c oxidase (complex IV, CIV), a multisubunit enzyme composed of 14 subunits. The complex is composed of a catalytic core of 3 subunits MT-CO1, MT-CO2 and MT-CO3, encoded in the mitochondrial DNA, and 11 supernumerary subunits COX4I, COX5A, COX5B, COX6A, COX6B, COX6C, COX7A, COX7B, COX7C, COX8 and NDUFA4, which are encoded in the nuclear genome. The complex exists as a monomer or a dimer and forms supercomplexes (SCs) in the inner mitochondrial membrane with NADH-ubiquinone oxidoreductase (complex I, CI) and ubiquinol-cytochrome c oxidoreductase (cytochrome b-c1 complex, complex III, CIII), resulting in different assemblies (supercomplex SCI(1)III(2)IV(1) and megacomplex MCI(2)III(2)IV(2)). In terms of processing, in response to mitochondrial stress, the precursor protein is ubiquitinated by the SIFI complex in the cytoplasm before mitochondrial import, leading to its degradation. Within the SIFI complex, UBR4 initiates ubiquitin chain that are further elongated or branched by KCMF1.

The protein localises to the mitochondrion inner membrane. Its pathway is energy metabolism; oxidative phosphorylation. Functionally, component of the cytochrome c oxidase, the last enzyme in the mitochondrial electron transport chain which drives oxidative phosphorylation. The respiratory chain contains 3 multisubunit complexes succinate dehydrogenase (complex II, CII), ubiquinol-cytochrome c oxidoreductase (cytochrome b-c1 complex, complex III, CIII) and cytochrome c oxidase (complex IV, CIV), that cooperate to transfer electrons derived from NADH and succinate to molecular oxygen, creating an electrochemical gradient over the inner membrane that drives transmembrane transport and the ATP synthase. Cytochrome c oxidase is the component of the respiratory chain that catalyzes the reduction of oxygen to water. Electrons originating from reduced cytochrome c in the intermembrane space (IMS) are transferred via the dinuclear copper A center (CU(A)) of subunit 2 and heme A of subunit 1 to the active site in subunit 1, a binuclear center (BNC) formed by heme A3 and copper B (CU(B)). The BNC reduces molecular oxygen to 2 water molecules using 4 electrons from cytochrome c in the IMS and 4 protons from the mitochondrial matrix. This chain is Cytochrome c oxidase subunit 8A, mitochondrial (COX8A), found in Otolemur crassicaudatus (Brown greater galago).